A 145-amino-acid chain; its full sequence is Large ribosomal subunit protein uL13 (145 aa).

This sequence belongs to the universal ribosomal protein uL13 family. Part of the 50S ribosomal subunit.

In terms of biological role, this protein is one of the early assembly proteins of the 50S ribosomal subunit, although it is not seen to bind rRNA by itself. It is important during the early stages of 50S assembly. This Staphylococcus aureus (strain Mu3 / ATCC 700698) protein is Large ribosomal subunit protein uL13.